Here is a 274-residue protein sequence, read N- to C-terminus: Large ribosomal subunit protein uL2 (274 aa).

Disordered regions lie at residues 34-53 (IAPI…TMRY) and 216-274 (RRPR…RRKK).

It belongs to the universal ribosomal protein uL2 family. In terms of assembly, part of the 50S ribosomal subunit. Forms a bridge to the 30S subunit in the 70S ribosome.

In terms of biological role, one of the primary rRNA binding proteins. Required for association of the 30S and 50S subunits to form the 70S ribosome, for tRNA binding and peptide bond formation. It has been suggested to have peptidyltransferase activity; this is somewhat controversial. Makes several contacts with the 16S rRNA in the 70S ribosome. This Flavobacterium psychrophilum (strain ATCC 49511 / DSM 21280 / CIP 103535 / JIP02/86) protein is Large ribosomal subunit protein uL2.